A 297-amino-acid chain; its full sequence is Acetyl-coenzyme A carboxylase carboxyl transferase subunit beta (297 aa).

Residues 1–23 (MSWIERILGRTSSSSSSSKSKVP) are disordered. Positions 26 to 295 (VWTKCTSCEQ…PFKTAELIVE (270 aa)) constitute a CoA carboxyltransferase N-terminal domain. Residues C30, C33, C49, and C52 each contribute to the Zn(2+) site. The segment at 30–52 (CTSCEQVLYSEELKRNMHVCPKC) adopts a C4-type zinc-finger fold.

The protein belongs to the AccD/PCCB family. As to quaternary structure, acetyl-CoA carboxylase is a heterohexamer composed of biotin carboxyl carrier protein (AccB), biotin carboxylase (AccC) and two subunits each of ACCase subunit alpha (AccA) and ACCase subunit beta (AccD). It depends on Zn(2+) as a cofactor.

It localises to the cytoplasm. It carries out the reaction N(6)-carboxybiotinyl-L-lysyl-[protein] + acetyl-CoA = N(6)-biotinyl-L-lysyl-[protein] + malonyl-CoA. Its pathway is lipid metabolism; malonyl-CoA biosynthesis; malonyl-CoA from acetyl-CoA: step 1/1. In terms of biological role, component of the acetyl coenzyme A carboxylase (ACC) complex. Biotin carboxylase (BC) catalyzes the carboxylation of biotin on its carrier protein (BCCP) and then the CO(2) group is transferred by the transcarboxylase to acetyl-CoA to form malonyl-CoA. The protein is Acetyl-coenzyme A carboxylase carboxyl transferase subunit beta of Actinobacillus pleuropneumoniae serotype 3 (strain JL03).